The chain runs to 400 residues: Exodeoxyribonuclease 7 large subunit (400 aa).

This sequence belongs to the XseA family. In terms of assembly, heterooligomer composed of large and small subunits.

The protein localises to the cytoplasm. It carries out the reaction Exonucleolytic cleavage in either 5'- to 3'- or 3'- to 5'-direction to yield nucleoside 5'-phosphates.. Bidirectionally degrades single-stranded DNA into large acid-insoluble oligonucleotides, which are then degraded further into small acid-soluble oligonucleotides. In Clostridium perfringens (strain SM101 / Type A), this protein is Exodeoxyribonuclease 7 large subunit.